The chain runs to 116 residues: Large ribosomal subunit protein bL19 (116 aa).

It belongs to the bacterial ribosomal protein bL19 family.

In terms of biological role, this protein is located at the 30S-50S ribosomal subunit interface and may play a role in the structure and function of the aminoacyl-tRNA binding site. The polypeptide is Large ribosomal subunit protein bL19 (Histophilus somni (strain 129Pt) (Haemophilus somnus)).